The primary structure comprises 278 residues: Tryptophan synthase alpha chain (278 aa).

Catalysis depends on proton acceptor residues Glu50 and Asp61.

The protein belongs to the TrpA family. Tetramer of two alpha and two beta chains.

It catalyses the reaction (1S,2R)-1-C-(indol-3-yl)glycerol 3-phosphate + L-serine = D-glyceraldehyde 3-phosphate + L-tryptophan + H2O. It participates in amino-acid biosynthesis; L-tryptophan biosynthesis; L-tryptophan from chorismate: step 5/5. Functionally, the alpha subunit is responsible for the aldol cleavage of indoleglycerol phosphate to indole and glyceraldehyde 3-phosphate. The sequence is that of Tryptophan synthase alpha chain from Rhodopseudomonas palustris (strain HaA2).